We begin with the raw amino-acid sequence, 222 residues long: L-serine dehydratase, beta chain (222 aa).

Residues 150-222 (TILLEYPEQR…RFTTAKYVEV (73 aa)) form the ACT domain.

Belongs to the iron-sulfur dependent L-serine dehydratase family. As to quaternary structure, heterooctamer of four alpha chains and four beta chains. Requires [4Fe-4S] cluster as cofactor.

The catalysed reaction is L-serine = pyruvate + NH4(+). It participates in carbohydrate biosynthesis; gluconeogenesis. The sequence is that of L-serine dehydratase, beta chain (sdhB) from Peptoniphilus asaccharolyticus (Peptostreptococcus asaccharolyticus).